We begin with the raw amino-acid sequence, 300 residues long: Cholesterol 25-hydroxylase-like protein (300 aa).

N9 is a glycosylation site (N-linked (GlcNAc...) asparagine). A run of 3 helical transmembrane segments spans residues 43-63 (LFPPFYALSIDYTWVAVFTFI), 95-115 (LQGWNQLLWIYPMALVQLIWV), and 130-152 (MVSQLAIFFLAFDFTYFWFHYFN). Positions 135–266 (AIFFLAFDFT…WFNYLDRLMG (132 aa)) constitute a Fatty acid hydroxylase domain. The short motif at 148–152 (FHYFN) is the Histidine box-1 element. The short motif at 163–167 (HSVHH) is the Histidine box-2 element. Residues 180–200 (LHPFELFFVATFITTVPWIFP) form a helical membrane-spanning segment. The Histidine box-3 signature appears at 242 to 248 (AHDMHHL).

The protein belongs to the sterol desaturase family. Requires Fe cation as cofactor.

It localises to the membrane. Its function is as follows. Probable sterol desaturase. In Caenorhabditis briggsae, this protein is Cholesterol 25-hydroxylase-like protein.